A 147-amino-acid polypeptide reads, in one-letter code: Lysozyme C (147 aa).

An N-terminal signal peptide occupies residues 1–18; that stretch reads MRSLLVLVLCFLPLAALG. Positions 19–147 constitute a C-type lysozyme domain; the sequence is KVYGRCELAA…VNAWIRGCRL (129 aa). Disulfide bonds link Cys-24/Cys-145, Cys-48/Cys-133, Cys-82/Cys-98, and Cys-94/Cys-112. Active-site residues include Glu-53 and Asp-70.

It belongs to the glycosyl hydrolase 22 family. In terms of assembly, monomer.

The protein localises to the secreted. The catalysed reaction is Hydrolysis of (1-&gt;4)-beta-linkages between N-acetylmuramic acid and N-acetyl-D-glucosamine residues in a peptidoglycan and between N-acetyl-D-glucosamine residues in chitodextrins.. Its function is as follows. Lysozymes have primarily a bacteriolytic function; those in tissues and body fluids are associated with the monocyte-macrophage system and enhance the activity of immunoagents. In Coturnix japonica (Japanese quail), this protein is Lysozyme C (LYZ).